Here is a 304-residue protein sequence, read N- to C-terminus: Phosphoribosylaminoimidazole-succinocarboxamide synthase (304 aa).

Belongs to the SAICAR synthetase family.

The enzyme catalyses 5-amino-1-(5-phospho-D-ribosyl)imidazole-4-carboxylate + L-aspartate + ATP = (2S)-2-[5-amino-1-(5-phospho-beta-D-ribosyl)imidazole-4-carboxamido]succinate + ADP + phosphate + 2 H(+). The protein operates within purine metabolism; IMP biosynthesis via de novo pathway; 5-amino-1-(5-phospho-D-ribosyl)imidazole-4-carboxamide from 5-amino-1-(5-phospho-D-ribosyl)imidazole-4-carboxylate: step 1/2. The sequence is that of Phosphoribosylaminoimidazole-succinocarboxamide synthase (ADE1) from Komagataella pastoris (Yeast).